A 180-amino-acid polypeptide reads, in one-letter code: Flavin prenyltransferase UbiX (180 aa).

FMN-binding positions include 9-11 (GAS), Ser33, 84-87 (SITT), and Arg119. Tyr149 and Arg165 together coordinate dimethylallyl phosphate.

Belongs to the UbiX/PAD1 family.

It carries out the reaction dimethylallyl phosphate + FMNH2 = prenylated FMNH2 + phosphate. Flavin prenyltransferase that catalyzes the synthesis of the prenylated FMN cofactor (prenyl-FMN) for 4-hydroxy-3-polyprenylbenzoic acid decarboxylase UbiD. The prenyltransferase is metal-independent and links a dimethylallyl moiety from dimethylallyl monophosphate (DMAP) to the flavin N5 and C6 atoms of FMN. The chain is Flavin prenyltransferase UbiX from Thermoplasma acidophilum (strain ATCC 25905 / DSM 1728 / JCM 9062 / NBRC 15155 / AMRC-C165).